A 334-amino-acid polypeptide reads, in one-letter code: Glycerol-3-phosphate dehydrogenase [NAD(P)+] (334 aa).

NADPH-binding residues include Trp13, Arg33, and Lys106. Sn-glycerol 3-phosphate-binding residues include Lys106, Gly137, and Ser139. Ala141 provides a ligand contact to NADPH. 5 residues coordinate sn-glycerol 3-phosphate: Lys192, Asp245, Ser255, Arg256, and Asn257. The active-site Proton acceptor is the Lys192. Arg256 provides a ligand contact to NADPH. 2 residues coordinate NADPH: Val280 and Glu282.

It belongs to the NAD-dependent glycerol-3-phosphate dehydrogenase family.

It localises to the cytoplasm. The enzyme catalyses sn-glycerol 3-phosphate + NAD(+) = dihydroxyacetone phosphate + NADH + H(+). It carries out the reaction sn-glycerol 3-phosphate + NADP(+) = dihydroxyacetone phosphate + NADPH + H(+). Its pathway is membrane lipid metabolism; glycerophospholipid metabolism. Its function is as follows. Catalyzes the reduction of the glycolytic intermediate dihydroxyacetone phosphate (DHAP) to sn-glycerol 3-phosphate (G3P), the key precursor for phospholipid synthesis. In Chlamydia trachomatis serovar A (strain ATCC VR-571B / DSM 19440 / HAR-13), this protein is Glycerol-3-phosphate dehydrogenase [NAD(P)+].